The following is a 371-amino-acid chain: DNA replication and repair protein RecF (371 aa).

Residue 30–37 coordinates ATP; sequence GENAQGKT.

The protein belongs to the RecF family.

The protein localises to the cytoplasm. Its function is as follows. The RecF protein is involved in DNA metabolism; it is required for DNA replication and normal SOS inducibility. RecF binds preferentially to single-stranded, linear DNA. It also seems to bind ATP. This Staphylococcus haemolyticus (strain JCSC1435) protein is DNA replication and repair protein RecF.